The primary structure comprises 78 residues: uncharacterized protein (78 aa).

A helical transmembrane segment spans residues 21–43 (SPFLFGAPLVGGLLGGFLGSALF).

Its subcellular location is the membrane. This is an uncharacterized protein from Bacillus subtilis (strain 168).